The following is a 215-amino-acid chain: Cytochrome b6 (215 aa).

A helical transmembrane segment spans residues Ile32–Phe52. Cys35 is a binding site for heme c. 2 residues coordinate heme b: His86 and His100. The next 3 helical transmembrane spans lie at Ala90–Phe110, Leu116–Tyr136, and Ala186–Ile206. The heme b site is built by His187 and His202.

This sequence belongs to the cytochrome b family. PetB subfamily. The 4 large subunits of the cytochrome b6-f complex are cytochrome b6, subunit IV (17 kDa polypeptide, PetD), cytochrome f and the Rieske protein, while the 4 small subunits are PetG, PetL, PetM and PetN. The complex functions as a dimer. Heme b serves as cofactor. Requires heme c as cofactor.

The protein localises to the plastid. Its subcellular location is the chloroplast thylakoid membrane. Component of the cytochrome b6-f complex, which mediates electron transfer between photosystem II (PSII) and photosystem I (PSI), cyclic electron flow around PSI, and state transitions. This chain is Cytochrome b6, found in Emiliania huxleyi (Coccolithophore).